Reading from the N-terminus, the 134-residue chain is Small ribosomal subunit protein uS8c (134 aa).

It belongs to the universal ribosomal protein uS8 family. Part of the 30S ribosomal subunit.

The protein resides in the plastid. It localises to the chloroplast. Functionally, one of the primary rRNA binding proteins, it binds directly to 16S rRNA central domain where it helps coordinate assembly of the platform of the 30S subunit. The polypeptide is Small ribosomal subunit protein uS8c (rps8) (Gossypium barbadense (Sea Island cotton)).